A 461-amino-acid polypeptide reads, in one-letter code: ADP-specific phosphofructokinase (461 aa).

Positions 1–457 (MVRELLEKAR…FTSYLAMLKE (457 aa)) constitute an ADPK domain. Mg(2+)-binding residues include Glu-268, Glu-298, and Asp-441. Asp-441 acts as the Proton acceptor in catalysis.

This sequence belongs to the carbohydrate kinase PfkC family. Requires Mg(2+) as cofactor.

Its subcellular location is the cytoplasm. The catalysed reaction is beta-D-fructose 6-phosphate + ADP = beta-D-fructose 1,6-bisphosphate + AMP + H(+). The protein operates within carbohydrate degradation; glycolysis. Its function is as follows. Catalyzes the phosphorylation of fructose 6-phosphate to fructose 1,6-bisphosphate using ADP as the phosphate donor. The polypeptide is ADP-specific phosphofructokinase (Thermococcus kodakarensis (strain ATCC BAA-918 / JCM 12380 / KOD1) (Pyrococcus kodakaraensis (strain KOD1))).